Consider the following 206-residue polypeptide: Large ribosomal subunit protein uL4 (206 aa).

The tract at residues 42–94 is disordered; sequence RRQQGSHKAQGRGDVSRTGSKMYKQKGTGRARHHSARAPQFRGGGQAHGPVVR. Basic residues predominate over residues 64-77; sequence YKQKGTGRARHHSA.

The protein belongs to the universal ribosomal protein uL4 family. In terms of assembly, part of the 50S ribosomal subunit.

Functionally, one of the primary rRNA binding proteins, this protein initially binds near the 5'-end of the 23S rRNA. It is important during the early stages of 50S assembly. It makes multiple contacts with different domains of the 23S rRNA in the assembled 50S subunit and ribosome. Forms part of the polypeptide exit tunnel. In Brucella abortus biovar 1 (strain 9-941), this protein is Large ribosomal subunit protein uL4.